The following is a 230-amino-acid chain: Cysteine S-methyltransferase OspZ (230 aa).

The interaction with host proteins TAB2, TAB3 and ZRANB3 stretch occupies residues 49-52 (GITR). Residues A92, S98, R107, Q111, Y204, and E208 each coordinate S-adenosyl-L-methionine.

This sequence belongs to the NleE/OspZ family. Monomer.

Its subcellular location is the secreted. The protein resides in the host cytoplasm. The protein localises to the host nucleus. The enzyme catalyses L-cysteinyl-[protein] + S-adenosyl-L-methionine = S-methyl-L-cysteinyl-[protein] + S-adenosyl-L-homocysteine + H(+). Cysteine methyltransferase effector that inhibits host cell NF-kappa-B activation by preventing nuclear translocation of host protein RELA/p65. Acts by mediating cysteine methylation of host proteins TAB2 and TAB3: methylation of a conserved cysteine residue of the RanBP2-type zinc finger (NZF) of TAB2 and TAB3 disrupts zinc-binding, thereby inactivating the ubiquitin chain-binding activity of TAB2 and TAB3, leading to NF-kappa-B inactivation. Also mediates cysteine methylation of host protein ZRANB3, inactivating its ability to bind ubiquitin chains. In Shigella flexneri, this protein is Cysteine S-methyltransferase OspZ.